We begin with the raw amino-acid sequence, 125 residues long: Small ribosomal subunit protein uS13 (125 aa).

Residues 93-125 (RAGLPVRGQRTRTNARTRRGARKTVAGKKKATR) are disordered. The span at 101 to 125 (QRTRTNARTRRGARKTVAGKKKATR) shows a compositional bias: basic residues.

It belongs to the universal ribosomal protein uS13 family. As to quaternary structure, part of the 30S ribosomal subunit. Forms a loose heterodimer with protein S19. Forms two bridges to the 50S subunit in the 70S ribosome.

Its function is as follows. Located at the top of the head of the 30S subunit, it contacts several helices of the 16S rRNA. In the 70S ribosome it contacts the 23S rRNA (bridge B1a) and protein L5 of the 50S subunit (bridge B1b), connecting the 2 subunits; these bridges are implicated in subunit movement. Contacts the tRNAs in the A and P-sites. This chain is Small ribosomal subunit protein uS13, found in Synechococcus elongatus (strain ATCC 33912 / PCC 7942 / FACHB-805) (Anacystis nidulans R2).